Reading from the N-terminus, the 168-residue chain is Protein GRE1 (168 aa).

The tract at residues 1–168 (MSNLLNKFAD…DDDSGNQGVW (168 aa)) is disordered. 2 stretches are compositionally biased toward basic and acidic residues: residues 8–20 (FADKLHGNDHDER) and 27–43 (DQTRQQRHEKHQQREFR). 2 stretches are compositionally biased toward polar residues: residues 56 to 81 (NQGNFPQRQQPQSNLGGNTQFGGNDF) and 120 to 144 (TSGQQQKQGRTRGAQSNRYQSSNIG).

It localises to the cytoplasm. The sequence is that of Protein GRE1 (GRE1) from Saccharomyces cerevisiae (strain ATCC 204508 / S288c) (Baker's yeast).